Consider the following 160-residue polypeptide: uncharacterized protein (160 aa).

In terms of domain architecture, N-acetyltransferase spans 7–151 (LLINFKTLEE…NPYIWHPDMD (145 aa)).

This is an uncharacterized protein from Bacillus velezensis (strain DSM 23117 / BGSC 10A6 / LMG 26770 / FZB42) (Bacillus amyloliquefaciens subsp. plantarum).